A 54-amino-acid polypeptide reads, in one-letter code: Large ribosomal subunit protein bL33 (54 aa).

It belongs to the bacterial ribosomal protein bL33 family.

This Parafrankia sp. (strain EAN1pec) protein is Large ribosomal subunit protein bL33.